A 190-amino-acid chain; its full sequence is GMP synthase [glutamine-hydrolyzing] subunit A (190 aa).

The Glutamine amidotransferase type-1 domain maps to 2–189 (TILVINNKGQ…YEICKKRCNN (188 aa)). The active-site Nucleophile is C76. Residues H163 and E165 contribute to the active site.

As to quaternary structure, heterodimer composed of a glutamine amidotransferase subunit (A) and a GMP-binding subunit (B).

It carries out the reaction XMP + L-glutamine + ATP + H2O = GMP + L-glutamate + AMP + diphosphate + 2 H(+). Its pathway is purine metabolism; GMP biosynthesis; GMP from XMP (L-Gln route): step 1/1. Catalyzes the synthesis of GMP from XMP. The chain is GMP synthase [glutamine-hydrolyzing] subunit A from Methanobrevibacter smithii (strain ATCC 35061 / DSM 861 / OCM 144 / PS).